Reading from the N-terminus, the 1086-residue chain is Sterol regulatory element-binding protein cleavage-activating protein (1086 aa).

Over 1–35 (MRIFTLGKGRISRGYARQVNPSLFAKYSYCIANNP) the chain is Cytoplasmic. Residues 36-56 (WYFILVFTLLSITGIYSSLVA) traverse the membrane as a helical segment. Topologically, residues 57 to 229 (YQQSLYDQSL…TVVARIPDLT (173 aa)) are lumenal. N-linked (GlcNAc...) asparagine glycosylation is found at N94 and N168. A helical transmembrane segment spans residues 230 to 250 (VIYRWYLWVGFGVGLFAYLYL). The region spanning 233 to 391 (RWYLWVGFGV…GSFFLAVLSV (159 aa)) is the SSD domain. Residues 251–265 (SLVRLHDIRAKFGLT) are Cytoplasmic-facing. The chain crosses the membrane as a helical span at residues 266–286 (ATIFIQSGTAYFSTCSLLYFF). Residues 287–290 (ERTG) are Lumenal-facing. A helical transmembrane segment spans residues 291 to 311 (PICPWPMAYYIIIFMDIENSF). The Cytoplasmic segment spans residues 312-337 (RLLRAVIASPQTKRVPSRIMEGFSST). The chain crosses the membrane as a helical span at residues 338-358 (IIASFSSLLKKLLTLFVLSFF). The Lumenal portion of the chain corresponds to 359–367 (VYPLVQEFC). The helical transmembrane segment at 368-388 (LFLACSFVVSFLLHGSFFLAV) threads the bilayer. Over 389 to 422 (LSVDIRRLELQDFLDSNSSNRNSKWWVPYLEYVR) the chain is Cytoplasmic. The ER export signal signature appears at 396–401 (LELQDF). The chain crosses the membrane as a helical span at residues 423–443 (FMWSPWIIDNLGTVSFHMYVI). Residues 444–544 (YLQLQSSTDI…FHDRRVWRWS (101 aa)) are Lumenal-facing. Residue N454 is glycosylated (N-linked (GlcNAc...) asparagine). Residues 545 to 565 (TFFSILFAIDFAVGLLVKALL) traverse the membrane as a helical segment. Over 566-1086 (RGWSDHDELS…QRKRSGTIGC (521 aa)) the chain is Cytoplasmic. WD repeat units follow at residues 593 to 632 (HHQLDILKIAVSENYKTFASVGLDRCLVVWDLRQWCTKLV), 637 to 675 (QMPRTLKAIALDPQGNYVSLFSKDTLFILNVESPCLMLQ), 680 to 727 (CKPN…EGAD), 736 to 776 (LSSP…WSPK), and 963 to 1009 (GHYN…KKHR). An interaction with sre1 region spans residues 640–1086 (RTLKAIALDP…QRKRSGTIGC (447 aa)).

It belongs to the WD repeat SCAP family. As to quaternary structure, forms a tight complex with scp1, composed of 4 copies of scp1 and 4 copies of sre1.

The protein resides in the endoplasmic reticulum membrane. Its subcellular location is the golgi apparatus membrane. In terms of biological role, escort protein required for sre1 processing at low sterol as well as oxygen levels. May regulate export of the scp1/sre1 complex from the ER at low sterol or oxygen levels. 4-methyl sterols bound to scp1 may mask an ER export signal in scp1 leading to retention of the complex in the ER. Release of 4-methyl sterols may trigger a conformational change in the SSD domain of scp1 unmasking the ER export signal leading to recruitment into COPII-coated vesicles, transport to the Golgi complex, proteolytic cleavage of sre1 in the Golgi, release of the transcription factor fragment of sre1 from the membrane, its import into the nucleus and up-regulation of genes required for ergosterol biosynthesis as well as anaerobic growth. Binds 4-methyl sterols. In Schizosaccharomyces pombe (strain 972 / ATCC 24843) (Fission yeast), this protein is Sterol regulatory element-binding protein cleavage-activating protein.